Reading from the N-terminus, the 232-residue chain is RNA chaperone ProQ (232 aa).

Residues 105 to 182 are disordered; that stretch reads EAKARVQAQR…REEQHTPVSD (78 aa). Residues 117–136 show a composition bias toward basic and acidic residues; that stretch reads QQAKKREAAAAAGEKEDAPR. The span at 137–146 shows a compositional bias: basic residues; that stretch reads RERKPRPTTP. Residues 147-177 are compositionally biased toward basic and acidic residues; it reads RRKEGAERKPRAQKSVEKAPKTVKAPREEQH.

It belongs to the ProQ family.

The protein localises to the cytoplasm. Functionally, RNA chaperone with significant RNA binding, RNA strand exchange and RNA duplexing activities. May regulate ProP activity through an RNA-based, post-transcriptional mechanism. In Escherichia coli O7:K1 (strain IAI39 / ExPEC), this protein is RNA chaperone ProQ.